Reading from the N-terminus, the 530-residue chain is Carbohydrate sulfotransferase 2 (530 aa).

Residues 1 to 20 (MSRSSPRALPPGALPRPLPA) are disordered. Residues 1 to 54 (MSRSSPRALPPGALPRPLPAAPAAVQRALLPPWPRRAGRRWPASPLGMKVFRRK) are Cytoplasmic-facing. A compositionally biased stretch (pro residues) spans 8 to 20 (ALPPGALPRPLPA). Residues 55–75 (ALVLCAGYALLLVLTMLNLLD) form a helical; Signal-anchor for type II membrane protein membrane-spanning segment. Residues 76-530 (YKWHKEPLQQ…SKTLLRKPRL (455 aa)) lie on the Lumenal side of the membrane. A disordered region spans residues 97–128 (GAAGAGWGRPGSPPAAPPRAHSRMDPRTPYRP). 173 to 179 (WRSGSSF) serves as a coordination point for 3'-phosphoadenylyl sulfate. An N-linked (GlcNAc...) asparagine glycan is attached at N243. Residue 332–340 (RDPRAVASS) participates in 3'-phosphoadenylyl sulfate binding. N457 and N475 each carry an N-linked (GlcNAc...) asparagine glycan.

The protein belongs to the sulfotransferase 1 family. Gal/GlcNAc/GalNAc subfamily. In terms of assembly, homodimer; disulfide-linked. Homodimerization is not essential for enzyme activity. As to expression, in brain, it is expressed in pyramidal cells in the CA3 subregion of the hippocampus, cerebellar nucleus and Purkinje cells. Expressed in peripheral lymph nodes.

The protein resides in the golgi apparatus. It is found in the trans-Golgi network membrane. The catalysed reaction is 3-O-{N-acetyl-beta-D-glucosaminyl-(1-&gt;3)-beta-D-galactosyl-(1-&gt;3)-N-acetyl-alpha-D-galactosaminyl}-L-threonyl-[protein] + 3'-phosphoadenylyl sulfate = 3-O-{6-O-sulfo-N-acetyl-beta-D-glucosaminyl-(1-&gt;3)-beta-D-galactosyl-(1-&gt;3)-N-acetyl-alpha-D-galactosaminyl}-L-threonyl-[protein] + adenosine 3',5'-bisphosphate + H(+). The enzyme catalyses 3-O-{N-acetyl-beta-D-glucosaminyl-(1-&gt;3)-beta-D-galactosyl-(1-&gt;3)-N-acetyl-alpha-D-galactosaminyl}-L-seryl-[protein] + 3'-phosphoadenylyl sulfate = 3-O-{6-O-sulfo-N-acetyl-beta-D-glucosaminyl-(1-&gt;3)-beta-D-galactosyl-(1-&gt;3)-N-acetyl-alpha-D-galactosaminyl}-L-seryl-[protein] + adenosine 3',5'-bisphosphate + H(+). It catalyses the reaction a 3-O-{beta-D-galactosyl-(1-&gt;3)-[N-acetyl-beta-D-glucosaminyl-(1-&gt;6)]-N-acetyl-alpha-D-galactosaminyl}-L-threonyl-[protein] + 3'-phosphoadenylyl sulfate = 3-O-{beta-D-galactosyl-(1-&gt;3)-[6-O-sulfo-N-acetyl-beta-D-glucosaminyl-(1-&gt;6)]-N-acetyl-alpha-D-galactosaminyl}-L-threonyl-[protein] + adenosine 3',5'-bisphosphate + H(+). It carries out the reaction 3-O-{beta-D-galactosyl-(1-&gt;3)-[N-acetyl-beta-D-glucosaminyl-(1-&gt;6)]-N-acetyl-alpha-D-galactosaminyl}-L-seryl-[protein] + 3'-phosphoadenylyl sulfate = 3-O-{beta-D-galactosyl-(1-&gt;3)-[6-O-sulfo-N-acetyl-beta-D-glucosaminyl-(1-&gt;6)]-N-acetyl-alpha-D-galactosaminyl}-L-seryl-[protein] + adenosine 3',5'-bisphosphate + H(+). It participates in protein modification; carbohydrate sulfation. In terms of biological role, sulfotransferase that utilizes 3'-phospho-5'-adenylyl sulfate (PAPS) as sulfonate donor to catalyze the transfer of sulfate to position 6 of non-reducing N-acetylglucosamine (GlcNAc) residues within keratan-like structures on N-linked glycans and within mucin-associated glycans that can ultimately serve as SELL ligands. SELL ligands are present in high endothelial cells (HEVs) and play a central role in lymphocyte homing at sites of inflammation. Participates in biosynthesis of the SELL ligand sialyl 6-sulfo Lewis X and in lymphocyte homing to Peyer patches. Has no activity toward O-linked sugars. Its substrate specificity may be influenced by its subcellular location. Sulfates GlcNAc residues at terminal, non-reducing ends of oligosaccharide chains. This is Carbohydrate sulfotransferase 2 (Chst2) from Mus musculus (Mouse).